A 238-amino-acid polypeptide reads, in one-letter code: Type III secretion protein hrcQa (238 aa).

Residues Asp66 to Tyr238 are hrcQa-C.

In terms of assembly, interacts with hrcQb.

It is found in the cell inner membrane. Component of the type III secretion system, which is required for effector protein delivery, parasitism, and pathogenicity. Probably participates in the formation of a C-ring-like assembly along with hrcQb. This Pseudomonas syringae pv. syringae protein is Type III secretion protein hrcQa (hrcQa).